Reading from the N-terminus, the 524-residue chain is uncharacterized protein (524 aa).

A compositionally biased stretch (polar residues) spans N83 to G101. Disordered regions lie at residues N83–Q108 and P155–R179.

It is found in the cytoplasm. This is an uncharacterized protein from Saccharomyces cerevisiae (strain ATCC 204508 / S288c) (Baker's yeast).